The sequence spans 319 residues: Free fatty acid receptor 3 (319 aa).

Residues 1-15 are Extracellular-facing; that stretch reads MDTSFFPGNHWLFFS. The helical transmembrane segment at 16-36 threads the bilayer; it reads VDLLVFLVGLPLNVMALVVFV. Residues 37–43 are Cytoplasmic-facing; that stretch reads NKLRRRP. Residues 44 to 64 traverse the membrane as a helical segment; that stretch reads VAVDLLLLNLTISDLLLLLFL. The Extracellular portion of the chain corresponds to 65–98; that stretch reads PFRIVEAACGMKWILPFIFCPLSGFLFFTTIYLT. Cys84 and Cys165 are oxidised to a cystine. A helical transmembrane segment spans residues 99–119; sequence SLFLMTVSIERFLSVAYPLWY. The Cytoplasmic portion of the chain corresponds to 120–127; it reads KTRPRLAQ. A helical membrane pass occupies residues 128-148; that stretch reads AGLVSGICWFLASAHCSVIYV. Over 149-183 the chain is Extracellular; the sequence is TEYWGNATYSQGTNGTCYLEFREDQLAILLPVRLE. The helical transmembrane segment at 184–206 threads the bilayer; it reads MAVVLFMVPLCITSYCYSRLVWI. The Cytoplasmic segment spans residues 207-218; that stretch reads LSQGASRRRRKR. Residues 219–239 traverse the membrane as a helical segment; that stretch reads VMGLLVATLLIFFVCFGPYNM. Residues 240-254 are Extracellular-facing; that stretch reads SHVVGYVRGESPTWR. A helical membrane pass occupies residues 255-275; that stretch reads SYVLLLSTLNSCIDPLVFYFS. Residues 276–319 are Cytoplasmic-facing; it reads SSKFQADFHQLLSRLIRACVPWTQEVSLELKVKNGEEPSKECPS.

This sequence belongs to the G-protein coupled receptor 1 family. In terms of tissue distribution, expressed in the sympathetic nervous system.

It localises to the cell membrane. G protein-coupled receptor that is activated by a major product of dietary fiber digestion, the short chain fatty acids (SCFAs), and that plays a role in the regulation of whole-body energy homeostasis and in intestinal immunity. In omnivorous mammals, the short chain fatty acids acetate, propionate and butyrate are produced primarily by the gut microbiome that metabolizes dietary fibers. SCFAs serve as a source of energy but also act as signaling molecules. That G protein-coupled receptor is probably coupled to the pertussis toxin-sensitive, G(i/o)-alpha family of G proteins. Its activation results in the formation of inositol 1,4,5-trisphosphate, the mobilization of intracellular calcium, the phosphorylation of the MAPK3/ERK1 and MAPK1/ERK2 kinases and the inhibition of intracellular cAMP accumulation. Activated by SCFAs and by beta-hydroxybutyrate, a ketone body produced by the liver upon starvation, it inhibits N-type calcium channels and modulates the activity of sympathetic neurons through a signaling cascade involving the beta and gamma subunits of its coupled G protein, phospholipase C and MAP kinases. Thereby, it may regulate energy expenditure through the control of the sympathetic nervous system that controls for instance heart rate. Upon activation by SCFAs accumulating in the intestine, it may also signal to the brain via neural circuits which in turn would regulate intestinal gluconeogenesis. May also control the production of hormones involved in whole-body energy homeostasis. May for instance, regulate blood pressure through renin secretion. May also regulate secretion of the PYY peptide by enteroendocrine cells and control gut motility, intestinal transit rate, and the harvesting of energy from SCFAs produced by gut microbiota. May also indirectly regulate the production of LEP/Leptin, a hormone acting on the CNS to inhibit food intake, in response to the presence of short-chain fatty acids in the intestine. Finally, may also play a role in glucose homeostasis. Besides its role in energy homeostasis, may play a role in intestinal immunity. May mediate the activation of the inflammatory and immune response by SCFAs in the gut, regulating the rapid production of chemokines and cytokines by intestinal epithelial cells. This chain is Free fatty acid receptor 3 (Ffar3), found in Rattus norvegicus (Rat).